An 85-amino-acid chain; its full sequence is Neutrophil elastase 2A (85 aa).

Residues 1 to 85 (IVGGRAAEPH…VAQGVFSFVR (85 aa)) enclose the Peptidase S1 domain. Residue Ser-67 is the Charge relay system of the active site.

This sequence belongs to the peptidase S1 family. Elastase subfamily.

May be involved in the degradation of connective tissue in chronic lung disease. This chain is Neutrophil elastase 2A, found in Equus caballus (Horse).